The sequence spans 400 residues: Elongation factor Tu (400 aa).

Positions 10-208 (KPHLNVGTIG…TMDEYFPEPQ (199 aa)) constitute a tr-type G domain. Positions 19 to 26 (GHIDHGKT) are G1. Residue 19-26 (GHIDHGKT) participates in GTP binding. Threonine 26 serves as a coordination point for Mg(2+). A G2 region spans residues 60-64 (GITIN). Residues 81 to 84 (DCPG) form a G3 region. GTP is bound by residues 81-85 (DCPGH) and 136-139 (NKTD). Residues 136 to 139 (NKTD) form a G4 region. The tract at residues 174–176 (SAL) is G5.

The protein belongs to the TRAFAC class translation factor GTPase superfamily. Classic translation factor GTPase family. EF-Tu/EF-1A subfamily. In terms of assembly, monomer.

It localises to the cytoplasm. It catalyses the reaction GTP + H2O = GDP + phosphate + H(+). Functionally, GTP hydrolase that promotes the GTP-dependent binding of aminoacyl-tRNA to the A-site of ribosomes during protein biosynthesis. The sequence is that of Elongation factor Tu from Thermosipho melanesiensis (strain DSM 12029 / CIP 104789 / BI429).